The primary structure comprises 208 residues: Calaxin (208 aa).

EF-hand domains follow at residues 64–99 (TDDM…FLHG), 100–135 (TLEE…SLLK), and 145–180 (GVKD…ENLL). Ca(2+) contacts are provided by D77, D79, D81, D113, N115, D117, Y119, E124, D158, D160, D162, K164, and D169.

Component of the outer dynein arm-docking complex along with ODAD1, ODAD2, ODAD3 and ODAD4.

The protein localises to the cytoplasm. The protein resides in the cytoskeleton. It localises to the cilium axoneme. It is found in the cell projection. Its subcellular location is the cilium. The protein localises to the flagellum. Its function is as follows. Component of the outer dynein arm-docking complex (ODA-DC) that mediates outer dynein arms (ODA) binding onto the doublet microtubule. Seems to regulate the assembly of both ODAs and their axonemal docking complex onto ciliary microtubules. Regulates ciliary and flagellar motility and is required for cilia-driven determination of body laterality. The protein is Calaxin (clxn) of Xenopus laevis (African clawed frog).